Reading from the N-terminus, the 389-residue chain is Chalcone synthase J (389 aa).

Residue C164 is part of the active site.

It belongs to the thiolase-like superfamily. Chalcone/stilbene synthases family.

It catalyses the reaction (E)-4-coumaroyl-CoA + 3 malonyl-CoA + 3 H(+) = 2',4,4',6'-tetrahydroxychalcone + 3 CO2 + 4 CoA. Its pathway is secondary metabolite biosynthesis; flavonoid biosynthesis. In terms of biological role, the primary product of this enzyme is 4,2',4',6'-tetrahydroxychalcone (also termed naringenin-chalcone or chalcone) which can under specific conditions spontaneously isomerize into naringenin. This is Chalcone synthase J (CHSJ) from Petunia hybrida (Petunia).